A 239-amino-acid chain; its full sequence is 7-cyano-7-deazaguanine synthase (239 aa).

13–23 (LSGGQDSATCL) lines the ATP pocket. C199, C214, C217, and C220 together coordinate Zn(2+).

It belongs to the QueC family. The cofactor is Zn(2+).

It carries out the reaction 7-carboxy-7-deazaguanine + NH4(+) + ATP = 7-cyano-7-deazaguanine + ADP + phosphate + H2O + H(+). It participates in purine metabolism; 7-cyano-7-deazaguanine biosynthesis. Its function is as follows. Catalyzes the ATP-dependent conversion of 7-carboxy-7-deazaguanine (CDG) to 7-cyano-7-deazaguanine (preQ(0)). The chain is 7-cyano-7-deazaguanine synthase from Acidovorax ebreus (strain TPSY) (Diaphorobacter sp. (strain TPSY)).